The chain runs to 388 residues: tRNA(Ile)-lysidine synthase (388 aa).

ATP is bound at residue 51–56; that stretch reads SGGRDS.

It belongs to the tRNA(Ile)-lysidine synthase family.

Its subcellular location is the cytoplasm. It carries out the reaction cytidine(34) in tRNA(Ile2) + L-lysine + ATP = lysidine(34) in tRNA(Ile2) + AMP + diphosphate + H(+). Functionally, ligates lysine onto the cytidine present at position 34 of the AUA codon-specific tRNA(Ile) that contains the anticodon CAU, in an ATP-dependent manner. Cytidine is converted to lysidine, thus changing the amino acid specificity of the tRNA from methionine to isoleucine. In Bifidobacterium longum (strain DJO10A), this protein is tRNA(Ile)-lysidine synthase.